Reading from the N-terminus, the 528-residue chain is Calcium-dependent protein kinase 4 (528 aa).

Over residues 1–16 the composition is skewed to polar residues; that stretch reads MGQEMSTQSDMQNENQ. A disordered region spans residues 1-36; it reads MGQEMSTQSDMQNENQKGNKRNLKGSQGKNGLKERS. The N-myristoyl glycine moiety is linked to residue G2. The region spanning 70-328 is the Protein kinase domain; the sequence is YKGIKILGKG…ARDALEHEWI (259 aa). ATP is bound by residues 76 to 84 and K99; that span reads LGKGSFGEV. Residue D193 is the Proton acceptor of the active site. The J domain autoinhibitory motif signature appears at 350–358; sequence NIKQFQSTQ. Residues 350 to 386 form a j domain region; the sequence is NIKQFQSTQKLAQAALLYMGSKLTTIDETKELTKIFK. Positions 359–368 match the J domain EF-hand interaction motif motif; that stretch reads KLAQAALLYM. 4 consecutive EF-hand domains span residues 376–411, 423–458, 459–494, and 498–528; these read DETK…LLKL, AIEV…RKLL, LSTE…GDVS, and WKTV…LCNY. Ca(2+) contacts are provided by D389, N391, D393, Q395, E400, D436, D438, N440, Y442, E447, D472, D474, S476, K478, E483, D506, N508, D510, E512, and E517.

The protein belongs to the protein kinase superfamily. Ser/Thr protein kinase family. CDPK subfamily. May interact with the pre-replication MCM complex prior male gametogenesis activation. Mg(2+) serves as cofactor. Post-translationally, myristoylated; myristoylation may target it to different subcellular compartments. During male gametogenesis, myristoylation is required to initiate DNA replication but not for mitotic spindle assembly or axoneme activation. Not palmitoylated. In terms of processing, may be autophosphorylated on Thr-234 in vitro.

Its subcellular location is the cytoplasm. It is found in the membrane. The protein localises to the chromosome. The catalysed reaction is L-seryl-[protein] + ATP = O-phospho-L-seryl-[protein] + ADP + H(+). It carries out the reaction L-threonyl-[protein] + ATP = O-phospho-L-threonyl-[protein] + ADP + H(+). With respect to regulation, activated by calcium. Upon calcium binding to the EF-hand domains, the C-terminus of the junction domain (J domain) undergoes a conformational change which results in the dissociation of the pseudo-substrate inhibitory motif from the catalytic domain. This, in turn, may facilitate the autophosphorylation of the activation loop at Thr-234, which leads to the kinase activation. Intracellular calcium increase is triggered by xanthurenic acid (XA), a small mosquito molecule that induces the differentiation of specialized transmission stages, the gametocytes, into male and female gametes. Activated by a decrease in temperature (20 degrees Celsius) and an increase in pH (7.6) occurring when the parasite is ingested by in the mosquito. Calcium-dependent protein kinase which acts as a sensor and effector of intracellular Ca(2+) levels probably in part downstream of cGMP-activated PKG kinase. Plays a central role in the host erythrocytes and hepatocytes infection cycles, sexual reproduction and mosquito transmission of the parasite. During the liver stage, involved in sporozoite motility and thus in sporozoite invasion of host hepatocytes, probably together with CDPK1 and CDPK5. Involved in merosome egress from host hepatocytes, probably together with CDPK5. During the asexual blood stage, involved in merozoite invasion of host erythrocytes and motility by stabilizing the inner membrane complex, a structure below the plasma membrane which acts as an anchor for the glidosome, an acto-myosin motor. Required for cell cycle progression in the male gametocyte. During male gametogenesis in the mosquito gut, required to initiate the first round of DNA replication, probably by facilitating the assembly of the pre-replicative MCM complex, to assemble the first mitotic spindle and, at the end of gametogenesis, to initiate axoneme motility, cytokinesis and subsequent exflagellation. For each of these steps, may phosphorylate SOC1, SOC2 and SOC3, respectively. Together with CDPK1, regulates ookinete gliding in the mosquito host midgut. In terms of biological role, during male gametogenesis in the mosquito gut, required to initiate the first round of DNA replication, probably by facilitating the assembly of the pre-replicative MCM complex, and to assemble the first mitotic spindle. Functionally, at the end of male gametogenesis in the mosquito gut, required to initiate axoneme motility, cytokinesis and subsequent exflagellation. This is Calcium-dependent protein kinase 4 from Plasmodium berghei (strain Anka).